A 368-amino-acid polypeptide reads, in one-letter code: Ferredoxin--NADP reductase 2 (368 aa).

FAD-binding residues include Asp-57, Gln-65, Tyr-70, Val-110, Phe-145, Asp-310, and Thr-351.

Belongs to the ferredoxin--NADP reductase type 2 family. Homodimer. FAD serves as cofactor.

It carries out the reaction 2 reduced [2Fe-2S]-[ferredoxin] + NADP(+) + H(+) = 2 oxidized [2Fe-2S]-[ferredoxin] + NADPH. This chain is Ferredoxin--NADP reductase 2, found in Cupriavidus pinatubonensis (strain JMP 134 / LMG 1197) (Cupriavidus necator (strain JMP 134)).